Here is a 202-residue protein sequence, read N- to C-terminus: Pectinesterase inhibitor 11 (202 aa).

The N-terminal stretch at 1–21 (MAKQIFYTLFLFLLSTAILTA) is a signal peptide. The cysteines at positions 43 and 52 are disulfide-linked. N-linked (GlcNAc...) asparagine glycosylation is present at Asn-76. Cys-109 and Cys-160 are oxidised to a cystine.

This sequence belongs to the PMEI family.

The protein resides in the secreted. The protein localises to the extracellular space. It is found in the apoplast. Pectin methylesterase (PME) inhibitor involved in the maintenance of cell wall integrity in response to necrotrophic pathogens. Modulates PME activity and pectin methylesterification during infection by Botrytis cinerea and contributes to resistance against the pathogen. The chain is Pectinesterase inhibitor 11 from Arabidopsis thaliana (Mouse-ear cress).